The sequence spans 201 residues: MSLSTLKNRRERGFFDGQFLIAMPGMEDRNFARTVIYICAHSDAGAMGFVINRPQSLTFTDVLLHLDMIKQEEPIVLPQRARDFPIQTGGPVESGRGFVLHSDDYASDSSIPVSDDICLTATLDIVRAISKGAGPKRATMLLGYSSWGAGQLENEVANNGWLTCPANEELIFDRSLEDKYERALAGMGVTAAMLSAEAGHA.

Belongs to the UPF0301 (AlgH) family.

This Rhizobium etli (strain CIAT 652) protein is UPF0301 protein RHECIAT_CH0001061.